Here is a 292-residue protein sequence, read N- to C-terminus: Small ribosomal subunit biogenesis GTPase RsgA (292 aa).

Positions 65–223 (KTELIRPTVA…VVDTPGFSSL (159 aa)) constitute a CP-type G domain. GTP is bound by residues 114-117 (NKLD) and 165-173 (GPSGVGKST). Cysteine 247, cysteine 252, histidine 254, and cysteine 260 together coordinate Zn(2+).

It belongs to the TRAFAC class YlqF/YawG GTPase family. RsgA subfamily. Monomer. Associates with 30S ribosomal subunit, binds 16S rRNA. Requires Zn(2+) as cofactor.

The protein localises to the cytoplasm. One of several proteins that assist in the late maturation steps of the functional core of the 30S ribosomal subunit. Helps release RbfA from mature subunits. May play a role in the assembly of ribosomal proteins into the subunit. Circularly permuted GTPase that catalyzes slow GTP hydrolysis, GTPase activity is stimulated by the 30S ribosomal subunit. This is Small ribosomal subunit biogenesis GTPase RsgA from Alkaliphilus metalliredigens (strain QYMF).